A 308-amino-acid polypeptide reads, in one-letter code: Aspartate carbamoyltransferase catalytic subunit (308 aa).

Residues arginine 55 and threonine 56 each contribute to the carbamoyl phosphate site. An L-aspartate-binding site is contributed by lysine 83. Residues arginine 105, histidine 133, and glutamine 136 each contribute to the carbamoyl phosphate site. L-aspartate-binding residues include arginine 166 and arginine 220. Carbamoyl phosphate contacts are provided by glycine 261 and proline 262.

Belongs to the aspartate/ornithine carbamoyltransferase superfamily. ATCase family. Heterododecamer (2C3:3R2) of six catalytic PyrB chains organized as two trimers (C3), and six regulatory PyrI chains organized as three dimers (R2).

The enzyme catalyses carbamoyl phosphate + L-aspartate = N-carbamoyl-L-aspartate + phosphate + H(+). It participates in pyrimidine metabolism; UMP biosynthesis via de novo pathway; (S)-dihydroorotate from bicarbonate: step 2/3. Its function is as follows. Catalyzes the condensation of carbamoyl phosphate and aspartate to form carbamoyl aspartate and inorganic phosphate, the committed step in the de novo pyrimidine nucleotide biosynthesis pathway. The protein is Aspartate carbamoyltransferase catalytic subunit of Chlorobium phaeobacteroides (strain DSM 266 / SMG 266 / 2430).